Here is a 507-residue protein sequence, read N- to C-terminus: Ribonuclease Y (507 aa).

The chain crosses the membrane as a helical span at residues 1–21; that stretch reads MLWYIVAGAGGLLIGYLIANY. A KH domain is found at 197 to 282; sequence TVSTVSLPSD…EMYEKAKQEV (86 aa). The region spanning 323–416 is the HD domain; the sequence is VLNHSIEVAL…VAAADALSAA (94 aa).

It belongs to the RNase Y family.

It localises to the cell membrane. Functionally, endoribonuclease that initiates mRNA decay. The protein is Ribonuclease Y of Thermotoga sp. (strain RQ2).